The chain runs to 431 residues: uncharacterized protein (431 aa).

A run of 4 helical transmembrane segments spans residues 228 to 248, 279 to 299, 349 to 369, and 388 to 408; these read GLLS…HYLS, IGLP…NFTF, ILWP…FLWI, and MIFN…LKLY.

It localises to the membrane. This is an uncharacterized protein from Saccharomyces cerevisiae (strain ATCC 204508 / S288c) (Baker's yeast).